Reading from the N-terminus, the 725-residue chain is Putative coiled-coil domain-containing protein 144B (725 aa).

Over residues 1–11 (MASWGGEKRGG) the composition is skewed to basic and acidic residues. Disordered stretches follow at residues 1–25 (MASW…ATRK), 87–188 (AARS…NLTE), 213–260 (LPEN…DCDR), 453–485 (NMNQ…DSDR), and 528–586 (EEEM…KVKN). 2 stretches are compositionally biased toward polar residues: residues 129–150 (PESL…LSDE) and 165–178 (PSVS…QSAT). Residues 215–244 (ENKESKEAEQDLELTSEEEQERLKGCENKQ) are a coiled coil. The span at 224-234 (QDLELTSEEEQ) shows a compositional bias: acidic residues. Residues 453–467 (NMNQNSDSGSTNNYK) show a composition bias toward polar residues. The stretch at 490-546 (YLHEELQQDMQKFKNEVNTLEEEFLALKKENVQLHKEVEEEMEKHRSNSTELSGTLT) forms a coiled coil. Positions 528–537 (EEEMEKHRSN) are enriched in basic and acidic residues. Positions 543–552 (GTLTDGTTVG) are enriched in low complexity. Over residues 563–583 (PRKENEEHDRPADKTANEKNK) the composition is skewed to basic and acidic residues. Residues 648–713 (LLKLKNNHCD…ALKQENGRKE (66 aa)) are a coiled coil.

Belongs to the CCDC144 family.

The protein is Putative coiled-coil domain-containing protein 144B of Homo sapiens (Human).